We begin with the raw amino-acid sequence, 78 residues long: Large ribosomal subunit protein bL28 (78 aa).

The disordered stretch occupies residues 1 to 25 (MSRVCQVTGKRPTVGNNRSHARNAT).

The protein belongs to the bacterial ribosomal protein bL28 family.

The protein is Large ribosomal subunit protein bL28 of Alteromonas mediterranea (strain DSM 17117 / CIP 110805 / LMG 28347 / Deep ecotype).